Reading from the N-terminus, the 204-residue chain is Wound-induced proteinase inhibitor 2 (204 aa).

An N-terminal signal peptide occupies residues 1–25; that stretch reads MAVPKEVSFLASLLVLGILLLHVDA. Repeat copies occupy residues 25-67, 68-125, and 126-183. 6 cysteine pairs are disulfide-bonded: Cys-28–Cys-100, Cys-38–Cys-75, Cys-41–Cys-59, Cys-42–Cys-71, Cys-48–Cys-84, and Cys-99–Cys-117. Residues 184–204 form a 4; truncated repeat; it reads PKACPKNCDPNIAYSLCLYEK.

This sequence belongs to the protease inhibitor I20 (potato type II proteinase inhibitor) family.

The sequence is that of Wound-induced proteinase inhibitor 2 (PIN2) from Capsicum annuum (Capsicum pepper).